Consider the following 543-residue polypeptide: Chaperonin GroEL 2 (543 aa).

ATP contacts are provided by residues 29–32 (TLGP), 86–90 (DGTTT), glycine 413, and aspartate 495. The segment at 524-543 (KPEPKENAPTGAGMGGDFDY) is disordered.

Belongs to the chaperonin (HSP60) family. As to quaternary structure, forms a cylinder of 14 subunits composed of two heptameric rings stacked back-to-back. Interacts with the co-chaperonin GroES.

The protein localises to the cytoplasm. It carries out the reaction ATP + H2O + a folded polypeptide = ADP + phosphate + an unfolded polypeptide.. Functionally, together with its co-chaperonin GroES, plays an essential role in assisting protein folding. The GroEL-GroES system forms a nano-cage that allows encapsulation of the non-native substrate proteins and provides a physical environment optimized to promote and accelerate protein folding. This is Chaperonin GroEL 2 from Acaryochloris marina (strain MBIC 11017).